A 177-amino-acid polypeptide reads, in one-letter code: Inorganic pyrophosphatase (177 aa).

Substrate is bound by residues Lys31, Arg45, and Tyr57. Residues Asp67, Asp72, and Asp104 each coordinate Mg(2+). Position 142 (Tyr142) interacts with substrate.

It belongs to the PPase family. In terms of assembly, homohexamer. The cofactor is Mg(2+).

The protein resides in the cytoplasm. The catalysed reaction is diphosphate + H2O = 2 phosphate + H(+). Catalyzes the hydrolysis of inorganic pyrophosphate (PPi) forming two phosphate ions. This Neisseria meningitidis serogroup A / serotype 4A (strain DSM 15465 / Z2491) protein is Inorganic pyrophosphatase.